Here is a 201-residue protein sequence, read N- to C-terminus: Recombination protein RecR (201 aa).

A C4-type zinc finger spans residues 60–75; sequence CHECGNVDTSDPCTIC. The 96-residue stretch at 83–178 folds into the Toprim domain; that stretch reads SILVVVEDVS…KVTKLAHGVP (96 aa).

The protein belongs to the RecR family.

Functionally, may play a role in DNA repair. It seems to be involved in an RecBC-independent recombinational process of DNA repair. It may act with RecF and RecO. This Methylobacterium nodulans (strain LMG 21967 / CNCM I-2342 / ORS 2060) protein is Recombination protein RecR.